Here is a 365-residue protein sequence, read N- to C-terminus: Chloroplast protein FOR GROWTH AND FERTILITY 1 (365 aa).

Disordered regions lie at residues 1–30 (MERLLQPSSSSSSISPSKFPSRTSPFLPRL) and 62–90 (YTPIGSNTTNNSFNGSPKSDESKPNPGFL). The N-terminal 79 residues, 1-79 (MERLLQPSSS…TNNSFNGSPK (79 aa)), are a transit peptide targeting the chloroplast. Composition is skewed to low complexity over residues 7–24 (PSSSSSSISPSKFPSRTS) and 62–77 (YTPIGSNTTNNSFNGS). 7 helical membrane-spanning segments follow: residues 109 to 129 (VILISAVAVLLLNPLLAPPAF), 139 to 159 (GWLTSAWTGFLAGCLHTLSGP), 182 to 202 (ALWGCGHDAGQVIFGLLFLLL), 218 to 238 (IVGLTLVIIGAMGIKEASEIP), 274 to 294 (GVVHGLQPDALMIVLPALALP), 301 to 321 (AFLIMFLVGTVIAMGSYTAFI), and 345 to 365 (LVAIGLGLGIVISPFFGFSLY).

In terms of tissue distribution, mostly expressed in leaves and flowers, to a lower extent, in stems, roots, floral bud, inflorescence and siliques, and, barely, in seedlings.

The protein localises to the plastid. It localises to the chloroplast membrane. Its subcellular location is the plastid membrane. In terms of biological role, together with CGF2, essential protein which supports female gametogenesis and embryogenesis, probably by securing local energy supply. The polypeptide is Chloroplast protein FOR GROWTH AND FERTILITY 1 (Arabidopsis thaliana (Mouse-ear cress)).